Reading from the N-terminus, the 282-residue chain is Cuticle collagen 8 (282 aa).

Residues Met1 to Ser24 form the signal peptide. Residues Gly86 to Ala282 form a disordered region. 2 triple-helical region regions span residues Gly95–Ile124 and Gly141–Asp269. The segment covering Thr170–Gly180 has biased composition (gly residues). Over residues Pro214–Glu224 the composition is skewed to pro residues. A compositionally biased stretch (gly residues) spans Gly225 to Gly234. Residues Asn235–Val244 show a composition bias toward low complexity.

Belongs to the cuticular collagen family. Collagen polypeptide chains are complexed within the cuticle by disulfide bonds and other types of covalent cross-links.

Functionally, nematode cuticles are composed largely of collagen-like proteins. The cuticle functions both as an exoskeleton and as a barrier to protect the worm from its environment. The protein is Cuticle collagen 8 (col-8) of Caenorhabditis elegans.